A 404-amino-acid polypeptide reads, in one-letter code: Argininosuccinate synthase (404 aa).

ATP is bound at residue 15 to 23 (AYSGGLDTS). Tyrosine 94 contributes to the L-citrulline binding site. Glycine 124 is an ATP binding site. The L-aspartate site is built by threonine 126, asparagine 130, and aspartate 131. Asparagine 130 is an L-citrulline binding site. L-citrulline is bound by residues arginine 134, serine 182, glutamate 266, and tyrosine 278.

This sequence belongs to the argininosuccinate synthase family. Type 1 subfamily. As to quaternary structure, homotetramer.

Its subcellular location is the cytoplasm. It carries out the reaction L-citrulline + L-aspartate + ATP = 2-(N(omega)-L-arginino)succinate + AMP + diphosphate + H(+). It functions in the pathway amino-acid biosynthesis; L-arginine biosynthesis; L-arginine from L-ornithine and carbamoyl phosphate: step 2/3. This chain is Argininosuccinate synthase, found in Streptomyces avermitilis (strain ATCC 31267 / DSM 46492 / JCM 5070 / NBRC 14893 / NCIMB 12804 / NRRL 8165 / MA-4680).